The sequence spans 114 residues: Hydrogenase maturation factor HypA (114 aa).

His-2 is a binding site for Ni(2+). Residues Cys-70, Cys-73, Cys-86, and Cys-89 each coordinate Zn(2+).

Belongs to the HypA/HybF family.

Functionally, involved in the maturation of [NiFe] hydrogenases. Required for nickel insertion into the metal center of the hydrogenase. This is Hydrogenase maturation factor HypA from Crocosphaera subtropica (strain ATCC 51142 / BH68) (Cyanothece sp. (strain ATCC 51142)).